The chain runs to 206 residues: Small ribosomal subunit protein uS4B (206 aa).

One can recognise an S4 RNA-binding domain in the interval 96-156 (GRLDNVVYRM…EKAKKQSRIG (61 aa)).

This sequence belongs to the universal ribosomal protein uS4 family. In terms of assembly, part of the 30S ribosomal subunit. Contacts protein S5. The interaction surface between S4 and S5 is involved in control of translational fidelity.

One of the primary rRNA binding proteins, it binds directly to 16S rRNA where it nucleates assembly of the body of the 30S subunit. Functionally, with S5 and S12 plays an important role in translational accuracy. The sequence is that of Small ribosomal subunit protein uS4B from Psychromonas ingrahamii (strain DSM 17664 / CCUG 51855 / 37).